Here is a 51-residue protein sequence, read N- to C-terminus: Putative protein LomR (51 aa).

It belongs to the outer membrane OOP (TC 1.B.6) superfamily. Ail family.

The polypeptide is Putative protein LomR (lomR) (Escherichia coli (strain K12)).